We begin with the raw amino-acid sequence, 420 residues long: MLDLKYIRANPEKVQEGLSKRNKDVSIAPILELDERRRKLLAEVESLKALQNQKSKEVPKLKKEGKDVTDLMNELKDLSDKIKELDSKVKEVEDEIEKILLTIPNIPHESVPVGKDDTENVEVRRWGEVREPDFEIKPHWEIGVNLGILDFERASKVSGSRFTFYRGLGARLERALINFMLDLHIEKHGYTELFPPFLVARKSMIGTGQLPKFEEDAFKTTDDYFLIPTAEVPVTNYHREEILKEEDLPIKYVAYSACFRAEAGAAGKDTRGLIRQHQFNKVELVKFTKPEDSYDELEKLTADAEDVLKELGLPYRVVLLCSGDLGFSSAKTYDIEVWMPSYGRYVEISSCSNFENYQARRANIRFRRKDGKLDYVHTLNGSGLAVGRTLAAILENFQQKDGTVVVPEVLRKYMGTDVIK.

229 to 231 (TAE) contacts L-serine. 260 to 262 (RAE) provides a ligand contact to ATP. Glu283 contacts L-serine. ATP is bound at residue 347–350 (EISS). Ser382 is a binding site for L-serine.

This sequence belongs to the class-II aminoacyl-tRNA synthetase family. Type-1 seryl-tRNA synthetase subfamily. As to quaternary structure, homodimer. The tRNA molecule binds across the dimer.

The protein localises to the cytoplasm. It carries out the reaction tRNA(Ser) + L-serine + ATP = L-seryl-tRNA(Ser) + AMP + diphosphate + H(+). It catalyses the reaction tRNA(Sec) + L-serine + ATP = L-seryl-tRNA(Sec) + AMP + diphosphate + H(+). It functions in the pathway aminoacyl-tRNA biosynthesis; selenocysteinyl-tRNA(Sec) biosynthesis; L-seryl-tRNA(Sec) from L-serine and tRNA(Sec): step 1/1. Functionally, catalyzes the attachment of serine to tRNA(Ser). Is also able to aminoacylate tRNA(Sec) with serine, to form the misacylated tRNA L-seryl-tRNA(Sec), which will be further converted into selenocysteinyl-tRNA(Sec). The polypeptide is Serine--tRNA ligase (Caldicellulosiruptor bescii (strain ATCC BAA-1888 / DSM 6725 / KCTC 15123 / Z-1320) (Anaerocellum thermophilum)).